Consider the following 427-residue polypeptide: Enolase (427 aa).

Gln-163 is a (2R)-2-phosphoglycerate binding site. Residue Glu-205 is the Proton donor of the active site. Residues Asp-242, Glu-285, and Asp-312 each contribute to the Mg(2+) site. 4 residues coordinate (2R)-2-phosphoglycerate: Lys-337, Arg-366, Ser-367, and Lys-388. The active-site Proton acceptor is the Lys-337.

Belongs to the enolase family. Mg(2+) is required as a cofactor.

The protein resides in the cytoplasm. It is found in the secreted. Its subcellular location is the cell surface. The catalysed reaction is (2R)-2-phosphoglycerate = phosphoenolpyruvate + H2O. The protein operates within carbohydrate degradation; glycolysis; pyruvate from D-glyceraldehyde 3-phosphate: step 4/5. Catalyzes the reversible conversion of 2-phosphoglycerate (2-PG) into phosphoenolpyruvate (PEP). It is essential for the degradation of carbohydrates via glycolysis. The protein is Enolase of Thiobacillus denitrificans (strain ATCC 25259 / T1).